We begin with the raw amino-acid sequence, 148 residues long: [Ribosomal protein bS18]-alanine N-acetyltransferase (148 aa).

The region spanning 2-147 is the N-acetyltransferase domain; it reads NTISILSTTD…DAIIMALPIS (146 aa). Acetyl-CoA-binding positions include 69 to 71 and 77 to 82; these read IAV and RRGLGR. E103 serves as the catalytic Proton acceptor. N108 is an acetyl-CoA binding site. Y115 functions as the Proton donor in the catalytic mechanism.

This sequence belongs to the acetyltransferase family. RimI subfamily.

It localises to the cytoplasm. It catalyses the reaction N-terminal L-alanyl-[ribosomal protein bS18] + acetyl-CoA = N-terminal N(alpha)-acetyl-L-alanyl-[ribosomal protein bS18] + CoA + H(+). Acetylates the N-terminal alanine of ribosomal protein bS18. The sequence is that of [Ribosomal protein bS18]-alanine N-acetyltransferase from Salmonella typhimurium (strain LT2 / SGSC1412 / ATCC 700720).